The following is a 313-amino-acid chain: DNA-directed RNA polymerase subunit alpha (313 aa).

The segment at 1 to 226 (MLEIEKPKIE…EHLQLFVNLN (226 aa)) is alpha N-terminal domain (alpha-NTD). The tract at residues 243–313 (KEKLAEMPIE…MGLSLRKEEE (71 aa)) is alpha C-terminal domain (alpha-CTD).

It belongs to the RNA polymerase alpha chain family. As to quaternary structure, homodimer. The RNAP catalytic core consists of 2 alpha, 1 beta, 1 beta' and 1 omega subunit. When a sigma factor is associated with the core the holoenzyme is formed, which can initiate transcription.

The enzyme catalyses RNA(n) + a ribonucleoside 5'-triphosphate = RNA(n+1) + diphosphate. Functionally, DNA-dependent RNA polymerase catalyzes the transcription of DNA into RNA using the four ribonucleoside triphosphates as substrates. The sequence is that of DNA-directed RNA polymerase subunit alpha from Carboxydothermus hydrogenoformans (strain ATCC BAA-161 / DSM 6008 / Z-2901).